The primary structure comprises 389 residues: Acyl-[acyl-carrier-protein] dehydrogenase MbtN (389 aa).

This sequence belongs to the acyl-CoA dehydrogenase family. The cofactor is FAD.

It participates in siderophore biosynthesis; mycobactin biosynthesis. Catalyzes the dehydrogenation at the alpha-beta position of ACP-bound acyl chains. This results in the introduction of a double bond in the lipidic chain, which is further transferred to the epsilon-amino group of lysine residue in the mycobactin core by MbtK. The sequence is that of Acyl-[acyl-carrier-protein] dehydrogenase MbtN (mbtN) from Mycobacterium sp. (strain MCS).